The primary structure comprises 349 residues: Hydroxymethylglutaryl-CoA synthase (349 aa).

Residues aspartate 29 and alanine 30 each contribute to the (3S)-3-hydroxy-3-methylglutaryl-CoA site. Catalysis depends on glutamate 81, which acts as the Proton donor/acceptor. Residues cysteine 113 and threonine 154 each contribute to the (3S)-3-hydroxy-3-methylglutaryl-CoA site. The active-site Acyl-thioester intermediate is cysteine 113. Position 202 (arginine 202) interacts with CoA. Residues threonine 204 and histidine 237 each coordinate (3S)-3-hydroxy-3-methylglutaryl-CoA. The active-site Proton donor/acceptor is histidine 237. Residue lysine 242 participates in CoA binding. (3S)-3-hydroxy-3-methylglutaryl-CoA is bound by residues lysine 246, asparagine 269, and serine 299.

It belongs to the thiolase-like superfamily. Archaeal HMG-CoA synthase family. Interacts with acetoacetyl-CoA thiolase that catalyzes the precedent step in the pathway and with a DUF35 protein. The acetoacetyl-CoA thiolase/HMG-CoA synthase complex channels the intermediate via a fused CoA-binding site, which allows for efficient coupling of the endergonic thiolase reaction with the exergonic HMGCS reaction.

It carries out the reaction acetoacetyl-CoA + acetyl-CoA + H2O = (3S)-3-hydroxy-3-methylglutaryl-CoA + CoA + H(+). The protein operates within metabolic intermediate biosynthesis; (R)-mevalonate biosynthesis; (R)-mevalonate from acetyl-CoA: step 2/3. Functionally, catalyzes the condensation of acetyl-CoA with acetoacetyl-CoA to form 3-hydroxy-3-methylglutaryl-CoA (HMG-CoA). Functions in the mevalonate (MVA) pathway leading to isopentenyl diphosphate (IPP), a key precursor for the biosynthesis of isoprenoid compounds that are building blocks of archaeal membrane lipids. In Methanosarcina barkeri (strain Fusaro / DSM 804), this protein is Hydroxymethylglutaryl-CoA synthase.